The primary structure comprises 309 residues: Oxygen-dependent coproporphyrinogen-III oxidase (309 aa).

Serine 100 contacts substrate. The a divalent metal cation site is built by histidine 104 and histidine 114. Histidine 114 (proton donor) is an active-site residue. A substrate-binding site is contributed by 116 to 118; it reads NVR. Positions 153 and 183 each coordinate a divalent metal cation. The tract at residues 248–283 is important for dimerization; it reads YAEFNLVYDRGTLFGLQSGGRTESILMSLPPIVHWE. Substrate is bound at residue 266-268; the sequence is GGR.

The protein belongs to the aerobic coproporphyrinogen-III oxidase family. In terms of assembly, homodimer. It depends on a divalent metal cation as a cofactor.

The protein resides in the cytoplasm. It catalyses the reaction coproporphyrinogen III + O2 + 2 H(+) = protoporphyrinogen IX + 2 CO2 + 2 H2O. Its pathway is porphyrin-containing compound metabolism; protoporphyrin-IX biosynthesis; protoporphyrinogen-IX from coproporphyrinogen-III (O2 route): step 1/1. Involved in the heme biosynthesis. Catalyzes the aerobic oxidative decarboxylation of propionate groups of rings A and B of coproporphyrinogen-III to yield the vinyl groups in protoporphyrinogen-IX. This is Oxygen-dependent coproporphyrinogen-III oxidase from Legionella pneumophila (strain Lens).